The following is a 97-amino-acid chain: Large ribosomal subunit protein bL28 (97 aa).

Belongs to the bacterial ribosomal protein bL28 family.

This chain is Large ribosomal subunit protein bL28, found in Bartonella henselae (strain ATCC 49882 / DSM 28221 / CCUG 30454 / Houston 1) (Rochalimaea henselae).